The sequence spans 287 residues: Inorganic pyrophosphatase (287 aa).

R80 is a binding site for diphosphate. Positions 117, 122, and 154 each coordinate Mg(2+).

The protein belongs to the PPase family. It depends on Mg(2+) as a cofactor.

It localises to the cytoplasm. It catalyses the reaction diphosphate + H2O = 2 phosphate + H(+). The sequence is that of Inorganic pyrophosphatase (IPP1) from Yarrowia lipolytica (strain CLIB 122 / E 150) (Yeast).